A 61-amino-acid polypeptide reads, in one-letter code: Bacteriocin leucocin-A (61 aa).

Positions 1-24 (MMNMKPTESYEQLDNSALEQVVGG) are excised as a propeptide. A disulfide bond links Cys33 and Cys38.

The protein belongs to the bacteriocin class IIA/YGNGV family.

It is found in the secreted. Its function is as follows. Inhibits a wide spectrum of lactic acid bacteria. This Leuconostoc gelidum protein is Bacteriocin leucocin-A (lcnA).